The primary structure comprises 258 residues: MLRFSANLSMLFGEYDFLARFEKAAQCGFRGVEFMFPYDYDIEELKHVLASNKLEHTLHNLPAGDWAAGERGIACIPGREEEFRDGVAAAIRYARALGNKKINCLVGKTPAGFSSEQIHATLVENLRYAANMLMKEDILLLIEPINHFDIPGFHLTGTRQALKLIDDVGCCNLKIQYDIYHMQRMEGELTNTMTQWADKIGHLQIADNPHRGEPGTGEINYDYLFKVIENSDYNGWVGCEYKPQTTTEAGLRWMDPYR.

Catalysis depends on proton donor/acceptor residues glutamate 143 and glutamate 240.

It belongs to the hyi family. As to quaternary structure, homodimer.

It carries out the reaction 3-hydroxypyruvate = 2-hydroxy-3-oxopropanoate. Its activity is regulated as follows. Not stimulated by addition of pyridoxal 5'-phosphate (0.1 mM), FAD, NAD(+), NADP(+) or ATP (1 mM each). EDTA (10 mM) and metal ions (1 mM) such as Ca(2+), Co(2+), Mg(2+), Ni(2+), Zn(2+) do not affect the enzyme activity. In terms of biological role, catalyzes the reversible isomerization between hydroxypyruvate and 2-hydroxy-3-oxopropanoate (also termed tartronate semialdehyde). Does not catalyze the isomerization of D-fructose to D-glucose or that of D-xylulose to D-xylose. Also does not catalyze racemization of serine, alanine, glycerate or lactate. In Escherichia coli (strain K12), this protein is Hydroxypyruvate isomerase (hyi).